Here is a 306-residue protein sequence, read N- to C-terminus: D-alanine--D-alanine ligase (306 aa).

The ATP-grasp domain maps to 101–303; that stretch reads KQVWQAVGLP…FSQLVVKILE (203 aa). An ATP-binding site is contributed by 134–189; the sequence is FTHLGLPLIVKPSREGSSVGMSKVNTLSDLPAALEEAFRHDDDVLVEKWLSGPEYT. Residues Asp-257, Glu-270, and Asn-272 each contribute to the Mg(2+) site.

It belongs to the D-alanine--D-alanine ligase family. The cofactor is Mg(2+). Mn(2+) serves as cofactor.

It localises to the cytoplasm. It carries out the reaction 2 D-alanine + ATP = D-alanyl-D-alanine + ADP + phosphate + H(+). The protein operates within cell wall biogenesis; peptidoglycan biosynthesis. Functionally, cell wall formation. This Pectobacterium atrosepticum (strain SCRI 1043 / ATCC BAA-672) (Erwinia carotovora subsp. atroseptica) protein is D-alanine--D-alanine ligase.